A 274-amino-acid polypeptide reads, in one-letter code: Putative phosphatase BUsg_029 (274 aa).

The active-site Nucleophile is aspartate 8. Aspartate 8 contacts Mg(2+). Phosphate is bound at residue leucine 9. Aspartate 10 contributes to the Mg(2+) binding site. Phosphate contacts are provided by residues 42 to 43 (SG) and lysine 191. Aspartate 214 contacts Mg(2+). Asparagine 217 lines the phosphate pocket.

Belongs to the HAD-like hydrolase superfamily. Cof family. The cofactor is Mg(2+).

The protein is Putative phosphatase BUsg_029 of Buchnera aphidicola subsp. Schizaphis graminum (strain Sg).